We begin with the raw amino-acid sequence, 410 residues long: Peptidase T (410 aa).

His79 is a binding site for Zn(2+). The active site involves Asp81. Asp142 is a binding site for Zn(2+). The Proton acceptor role is filled by Glu176. 3 residues coordinate Zn(2+): Glu177, Asp199, and His381.

Belongs to the peptidase M20B family. Zn(2+) serves as cofactor.

It is found in the cytoplasm. It carries out the reaction Release of the N-terminal residue from a tripeptide.. Functionally, cleaves the N-terminal amino acid of tripeptides. The polypeptide is Peptidase T (pepT) (Bacillus subtilis (strain 168)).